We begin with the raw amino-acid sequence, 419 residues long: Serine hydroxymethyltransferase (419 aa).

(6S)-5,6,7,8-tetrahydrofolate-binding positions include Leu121 and 125-127 (GHL). Residue Lys229 is modified to N6-(pyridoxal phosphate)lysine.

The protein belongs to the SHMT family. In terms of assembly, homodimer. Pyridoxal 5'-phosphate serves as cofactor.

Its subcellular location is the cytoplasm. It carries out the reaction (6R)-5,10-methylene-5,6,7,8-tetrahydrofolate + glycine + H2O = (6S)-5,6,7,8-tetrahydrofolate + L-serine. It participates in one-carbon metabolism; tetrahydrofolate interconversion. It functions in the pathway amino-acid biosynthesis; glycine biosynthesis; glycine from L-serine: step 1/1. Functionally, catalyzes the reversible interconversion of serine and glycine with tetrahydrofolate (THF) serving as the one-carbon carrier. This reaction serves as the major source of one-carbon groups required for the biosynthesis of purines, thymidylate, methionine, and other important biomolecules. Also exhibits THF-independent aldolase activity toward beta-hydroxyamino acids, producing glycine and aldehydes, via a retro-aldol mechanism. The polypeptide is Serine hydroxymethyltransferase (Histophilus somni (strain 2336) (Haemophilus somnus)).